The sequence spans 58 residues: Small ribosomal subunit protein bS21 (58 aa).

The segment at R35 to K58 is disordered. The span at V43–K58 shows a compositional bias: basic residues.

This sequence belongs to the bacterial ribosomal protein bS21 family.

The protein is Small ribosomal subunit protein bS21 of Ruminiclostridium cellulolyticum (strain ATCC 35319 / DSM 5812 / JCM 6584 / H10) (Clostridium cellulolyticum).